A 313-amino-acid chain; its full sequence is Olfactory receptor 1J4 (313 aa).

Residues 1-25 (MKRENQSSVSEFLLLDLPIWPEQQA) lie on the Extracellular side of the membrane. N-linked (GlcNAc...) asparagine glycosylation occurs at N5. A helical transmembrane segment spans residues 26 to 49 (VFFTLFLGMYLITVLGNLLIILLI). Over 50–57 (RLDSHLHT) the chain is Cytoplasmic. The chain crosses the membrane as a helical span at residues 58–79 (PMFFFLSHLALTDISLSSVTVP). The Extracellular segment spans residues 80–100 (KMLLSMQTQDQSILYAGCVTQ). Cysteines 97 and 189 form a disulfide. A helical membrane pass occupies residues 101–120 (MYFFIFFTDLDNFLLTSMAY). Topologically, residues 121–139 (DRYVAICHPLRYTTIMKEG) are cytoplasmic. A helical transmembrane segment spans residues 140–158 (LCNLLVTVSWILSCTNALS). The Extracellular segment spans residues 159–195 (HTLLLAQLSFCADNTIPHFFCDLVALLKLSCSDISLN). Residues 196-219 (ELVIFTVGQAVITLPLICILISYG) form a helical membrane-spanning segment. The Cytoplasmic segment spans residues 220-236 (HIGVTILKAPSTKGIFK). A helical membrane pass occupies residues 237–259 (ALSTCGSHLSVVSLYYGTIIGLY). At 260–272 (FLPSSSASSDKDV) the chain is on the extracellular side. A helical membrane pass occupies residues 273–292 (IASVMYTVITPLLNPFIYSL). Residues 293-313 (RNRDIKGALERLFNRATVLSQ) lie on the Cytoplasmic side of the membrane.

It belongs to the G-protein coupled receptor 1 family.

Its subcellular location is the cell membrane. Its function is as follows. Odorant receptor. This is Olfactory receptor 1J4 (OR1J4) from Homo sapiens (Human).